Consider the following 450-residue polypeptide: Tubulin alpha-6 chain (450 aa).

Residues Q11, E71, G144, T145, T179, N206, and N228 each coordinate GTP. Position 71 (E71) interacts with Mg(2+). E254 is a catalytic residue. T349 is modified (phosphothreonine). Residues K430–Y450 are disordered. Over residues D431–Y450 the composition is skewed to acidic residues.

It belongs to the tubulin family. In terms of assembly, dimer of alpha and beta chains. A typical microtubule is a hollow water-filled tube with an outer diameter of 25 nm and an inner diameter of 15 nM. Alpha-beta heterodimers associate head-to-tail to form protofilaments running lengthwise along the microtubule wall with the beta-tubulin subunit facing the microtubule plus end conferring a structural polarity. Microtubules usually have 13 protofilaments but different protofilament numbers can be found in some organisms and specialized cells. Interacts with TFCB. The cofactor is Mg(2+). In terms of processing, undergoes a tyrosination/detyrosination cycle, the cyclic removal and re-addition of a C-terminal tyrosine residue by the enzymes tubulin tyrosine carboxypeptidase (TTCP) and tubulin tyrosine ligase (TTL), respectively. Post-translationally, acetylation of alpha chains at Lys-40 stabilizes microtubules and affects affinity and processivity of microtubule motors. This modification has a role in multiple cellular functions, ranging from cell motility, cell cycle progression or cell differentiation to intracellular trafficking and signaling.

It is found in the cytoplasm. It localises to the cytoskeleton. The catalysed reaction is GTP + H2O = GDP + phosphate + H(+). Its function is as follows. Tubulin is the major constituent of microtubules, a cylinder consisting of laterally associated linear protofilaments composed of alpha- and beta-tubulin heterodimers. Microtubules grow by the addition of GTP-tubulin dimers to the microtubule end, where a stabilizing cap forms. Below the cap, tubulin dimers are in GDP-bound state, owing to GTPase activity of alpha-tubulin. This Arabidopsis thaliana (Mouse-ear cress) protein is Tubulin alpha-6 chain (TUBA6).